The primary structure comprises 167 residues: UPF0598 protein CG30010 (167 aa).

It belongs to the UPF0598 family.

The sequence is that of UPF0598 protein CG30010 from Drosophila melanogaster (Fruit fly).